The sequence spans 359 residues: Mandelate racemase (359 aa).

Lysine 166 acts as the Proton acceptor; specific for S-mandelate in catalysis. Aspartate 195, glutamate 221, and glutamate 247 together coordinate Mg(2+). Histidine 297 acts as the Proton acceptor; specific for R-mandelate in catalysis. Glutamate 317 contributes to the substrate binding site.

It belongs to the mandelate racemase/muconate lactonizing enzyme family. In terms of assembly, homooctamer. Mg(2+) serves as cofactor.

It carries out the reaction (S)-mandelate = (R)-mandelate. The protein operates within aromatic compound metabolism; (R)-mandelate degradation; benzoate from (R)-mandelate: step 1/4. The chain is Mandelate racemase (mdlA) from Pseudomonas putida (Arthrobacter siderocapsulatus).